The chain runs to 75 residues: UPF0346 protein OB1736 (75 aa).

It belongs to the UPF0346 family.

This Oceanobacillus iheyensis (strain DSM 14371 / CIP 107618 / JCM 11309 / KCTC 3954 / HTE831) protein is UPF0346 protein OB1736.